Reading from the N-terminus, the 311-residue chain is tRNA-cytidine(32) 2-sulfurtransferase (311 aa).

Residues 47 to 52 (SGGKDS) carry the PP-loop motif motif. 3 residues coordinate [4Fe-4S] cluster: cysteine 122, cysteine 125, and cysteine 213.

It belongs to the TtcA family. Homodimer. It depends on Mg(2+) as a cofactor. [4Fe-4S] cluster serves as cofactor.

It is found in the cytoplasm. The catalysed reaction is cytidine(32) in tRNA + S-sulfanyl-L-cysteinyl-[cysteine desulfurase] + AH2 + ATP = 2-thiocytidine(32) in tRNA + L-cysteinyl-[cysteine desulfurase] + A + AMP + diphosphate + H(+). It functions in the pathway tRNA modification. Catalyzes the ATP-dependent 2-thiolation of cytidine in position 32 of tRNA, to form 2-thiocytidine (s(2)C32). The sulfur atoms are provided by the cysteine/cysteine desulfurase (IscS) system. The polypeptide is tRNA-cytidine(32) 2-sulfurtransferase (Escherichia coli O157:H7).